Reading from the N-terminus, the 324-residue chain is Beta-ketoacyl-[acyl-carrier-protein] synthase III (324 aa).

Residues C112 and H249 contribute to the active site. The segment at 250-254 (QANRR) is ACP-binding. N279 is a catalytic residue.

The protein belongs to the thiolase-like superfamily. FabH family. In terms of assembly, homodimer.

It localises to the cytoplasm. It catalyses the reaction malonyl-[ACP] + acetyl-CoA + H(+) = 3-oxobutanoyl-[ACP] + CO2 + CoA. The protein operates within lipid metabolism; fatty acid biosynthesis. In terms of biological role, catalyzes the condensation reaction of fatty acid synthesis by the addition to an acyl acceptor of two carbons from malonyl-ACP. Catalyzes the first condensation reaction which initiates fatty acid synthesis and may therefore play a role in governing the total rate of fatty acid production. Possesses both acetoacetyl-ACP synthase and acetyl transacylase activities. Its substrate specificity determines the biosynthesis of branched-chain and/or straight-chain of fatty acids. In Streptococcus pyogenes serotype M6 (strain ATCC BAA-946 / MGAS10394), this protein is Beta-ketoacyl-[acyl-carrier-protein] synthase III.